Here is a 919-residue protein sequence, read N- to C-terminus: Exostosin-like 3 (919 aa).

At 1 to 30 the chain is on the cytoplasmic side; it reads MTGYTMLRNGGAGNGGQTCMLRWSNRIRLT. The tract at residues 1-140 is required for interaction with REG3A; the sequence is MTGYTMLRNG…LKNVISQTEH (140 aa). A helical; Signal-anchor for type II membrane protein transmembrane segment spans residues 31-51; the sequence is WLSFTLFVILVFFPLIAHYYL. Residues 52–919 are Lumenal-facing; sequence TTLDEADEAG…HDKTKCFKFI (868 aa). 2 cysteine pairs are disulfide-bonded: Cys177–Cys182 and Cys188–Cys236. Asn290 is a glycosylation site (N-linked (GlcNAc...) asparagine). Ser362 is modified (phosphoserine). Cys400 and Cys415 form a disulfide bridge. Residue Asn592 is glycosylated (N-linked (GlcNAc...) asparagine). The UDP-N-acetyl-alpha-D-glucosamine site is built by Leu668, Arg672, Asn697, Asn723, Arg728, Asp744, Asp745, and Asp746. Asp746 is a Mn(2+) binding site. Residue Asn790 is glycosylated (N-linked (GlcNAc...) asparagine). An intrachain disulfide couples Cys831 to Cys879. Glu832, Asp833, and Arg876 together coordinate UDP-N-acetyl-alpha-D-glucosamine. Residue Asp833 is part of the active site.

The protein belongs to the glycosyltransferase 47 family. As to quaternary structure, homodimer; disulfide-linked. Interacts with REG3A. Mn(2+) serves as cofactor. As to expression, ubiquitous. Expressed in keratinocytes. Expressed in pancreas.

Its subcellular location is the endoplasmic reticulum membrane. The protein resides in the golgi apparatus. It localises to the cell membrane. It is found in the nucleus. It catalyses the reaction 3-O-(beta-D-GlcA-(1-&gt;3)-beta-D-Gal-(1-&gt;3)-beta-D-Gal-(1-&gt;4)-beta-D-Xyl)-L-seryl-[protein] + UDP-N-acetyl-alpha-D-glucosamine = 3-O-(alpha-D-GlcNAc-(1-&gt;4)-beta-D-GlcA-(1-&gt;3)-beta-D-Gal-(1-&gt;3)-beta-D-Gal-(1-&gt;4)-beta-D-Xyl)-L-seryl-[protein] + UDP + H(+). The protein operates within glycan metabolism; heparan sulfate biosynthesis. Functionally, glycosyltransferase which regulates the biosynthesis of heparan sulfate (HS). Initiates HS synthesis by transferring the first N-acetyl-alpha-D-glucosamine (alpha-GlcNAc) residue (GlcNAcT-I activity) to the tetrasaccharide linker (GlcA-Gal-Gal-Xyl-)Ser core linker. May also transfer alpha-GlcNAc residues during HS elongation (GlcNAcT-II activity). Lacks glucuronyl transferase II (GlcAT-II) activity. Important for both skeletal development and hematopoiesis, through the formation of HS proteoglycans (HSPGs). Through the synthesis of HS, regulates postnatal pancreatic islet maturation and insulin secretion. In terms of biological role, receptor for REG3A, REG3B and REG3G, induces the activation of downstream signaling pathways such as PI3K-AKT or RAS-RAF-MEK-ERK signaling pathway. Required for the function of REG3A in regulating keratinocyte proliferation and differentiation. Required for the inhibition of skin inflammation mediated by REG3A through the activation of PI3K-AKT-STAT3 pathway. Required for the function of REG3A and REG3G in glucose tolerance in pancreas. Expressed in microglia, is activated by nociceptor-derived REG3G in response to endotoxins, leading to the inhibition of kynurenine pathway to prevent endotoxic death. The chain is Exostosin-like 3 from Homo sapiens (Human).